The primary structure comprises 532 residues: Flavin-containing monooxygenase 3 (532 aa).

FAD is bound by residues glycine 9 to serine 13, glutamate 32, leucine 40 to tryptophan 41, and asparagine 61 to serine 62. NADP(+)-binding positions include threonine 60 to asparagine 61 and serine 195 to aspartate 198. A Phosphoserine modification is found at serine 401. The helical transmembrane segment at cysteine 512–isoleucine 532 threads the bilayer.

Belongs to the FMO family. The cofactor is FAD.

The protein resides in the microsome membrane. Its subcellular location is the endoplasmic reticulum membrane. The catalysed reaction is trimethylamine + NADPH + O2 = trimethylamine N-oxide + NADP(+) + H2O. It catalyses the reaction N,N-dimethylaniline + NADPH + O2 + H(+) = N,N-dimethylaniline N-oxide + NADP(+) + H2O. It carries out the reaction hypotaurine + NADPH + O2 + H(+) = taurine + NADP(+) + H2O. The enzyme catalyses (S)-nicotine + NADPH + O2 = trans-(S)-nicotine N(1')-oxide + NADP(+) + H2O. The catalysed reaction is albendazole + NADPH + O2 + H(+) = albendazole S-oxide + NADP(+) + H2O. In terms of biological role, essential hepatic enzyme that catalyzes the oxygenation of a wide variety of nitrogen- and sulfur-containing compounds including drugs as well as dietary compounds. Plays an important role in the metabolism of trimethylamine (TMA), via the production of trimethylamine N-oxide (TMAO) metabolite. TMA is generated by the action of gut microbiota using dietary precursors such as choline, choline containing compounds, betaine or L-carnitine. By regulating TMAO concentration, FMO3 directly impacts both platelet responsiveness and rate of thrombus formation. This chain is Flavin-containing monooxygenase 3 (FMO3), found in Canis lupus familiaris (Dog).